The following is a 379-amino-acid chain: Cytochrome b (379 aa).

4 helical membrane passes run 33–53, 77–98, 113–133, and 178–198; these read LGSL…FLAM, WTIR…YLHI, WNTG…GYVL, and FFTL…THLL. The heme b site is built by His-83 and His-97. Positions 182 and 196 each coordinate heme b. His-201 provides a ligand contact to a ubiquinone. 4 helical membrane-spanning segments follow: residues 226–246, 288–308, 320–340, and 347–367; these read IKDI…TLLH, LGGV…PMTH, ISQC…WIGG, and FTTI…ILTP.

Belongs to the cytochrome b family. As to quaternary structure, the cytochrome bc1 complex contains 11 subunits: 3 respiratory subunits (MT-CYB, CYC1 and UQCRFS1), 2 core proteins (UQCRC1 and UQCRC2) and 6 low-molecular weight proteins (UQCRH/QCR6, UQCRB/QCR7, UQCRQ/QCR8, UQCR10/QCR9, UQCR11/QCR10 and a cleavage product of UQCRFS1). This cytochrome bc1 complex then forms a dimer. Requires heme b as cofactor.

It is found in the mitochondrion inner membrane. Functionally, component of the ubiquinol-cytochrome c reductase complex (complex III or cytochrome b-c1 complex) that is part of the mitochondrial respiratory chain. The b-c1 complex mediates electron transfer from ubiquinol to cytochrome c. Contributes to the generation of a proton gradient across the mitochondrial membrane that is then used for ATP synthesis. This is Cytochrome b (MT-CYB) from Bradypus tridactylus (Pale-throated three-toed sloth).